A 306-amino-acid polypeptide reads, in one-letter code: N-acetylmuramic acid 6-phosphate etherase (306 aa).

Positions Ile55–Lys218 constitute an SIS domain. The active-site Proton donor is Glu83. Residue Glu114 is part of the active site.

It belongs to the GCKR-like family. MurNAc-6-P etherase subfamily. As to quaternary structure, homodimer.

The enzyme catalyses N-acetyl-D-muramate 6-phosphate + H2O = N-acetyl-D-glucosamine 6-phosphate + (R)-lactate. It participates in amino-sugar metabolism; N-acetylmuramate degradation. Its function is as follows. Specifically catalyzes the cleavage of the D-lactyl ether substituent of MurNAc 6-phosphate, producing GlcNAc 6-phosphate and D-lactate. The polypeptide is N-acetylmuramic acid 6-phosphate etherase (Caldanaerobacter subterraneus subsp. tengcongensis (strain DSM 15242 / JCM 11007 / NBRC 100824 / MB4) (Thermoanaerobacter tengcongensis)).